Reading from the N-terminus, the 61-residue chain is Small ribosomal subunit protein uS14 (61 aa).

Zn(2+) is bound by residues C24, C27, C40, and C43.

It belongs to the universal ribosomal protein uS14 family. Zinc-binding uS14 subfamily. Part of the 30S ribosomal subunit. Contacts proteins S3 and S10. Zn(2+) is required as a cofactor.

Binds 16S rRNA, required for the assembly of 30S particles and may also be responsible for determining the conformation of the 16S rRNA at the A site. This Acidothermus cellulolyticus (strain ATCC 43068 / DSM 8971 / 11B) protein is Small ribosomal subunit protein uS14.